The primary structure comprises 868 residues: Pro-neuregulin-2, membrane-bound isoform (868 aa).

A disordered region spans residues 1-114 (MRQVCCSALP…AAGGMRRDPA (114 aa)). Residues 1–127 (MRQVCCSALP…SMLLFGVSLA (127 aa)) constitute a propeptide that is removed on maturation. Residues 19 to 75 (SSYSYSDSSSSSSSNNSSSSTSSRSSSRSSSRSSRGSTTTTSSSENSGSNSGSIFRP) show a composition bias toward low complexity. 2 N-linked (GlcNAc...) asparagine glycosylation sites follow: Asn-33 and Asn-34. A compositionally biased stretch (pro residues) spans 76–90 (AAPPEPRPQPQPQPR). Low complexity predominate over residues 91–108 (SPAARRAAARSRAAAAGG). Topologically, residues 128–429 (CYSPSLKSVQ…KEAEELYQKR (302 aa)) are extracellular. Asn-163, Asn-294, and Asn-362 each carry an N-linked (GlcNAc...) asparagine glycan. Positions 253-348 (PKLKKMKSQT…RGRLHVNSVS (96 aa)) constitute an Ig-like C2-type domain. 4 disulfide bridges follow: Cys-273-Cys-327, Cys-361-Cys-375, Cys-369-Cys-386, and Cys-388-Cys-397. The EGF-like domain occupies 357-398 (HARKCNETAKSYCVNGGVCYYIEGINQLSCKCPNGFFGQRCL). The helical transmembrane segment at 430-450 (VLTITGICVALLVVGIVCVVA) threads the bilayer. The Cytoplasmic portion of the chain corresponds to 451 to 868 (YCKTKKQRRQ…TRAKQDSGPL (418 aa)). 5 disordered regions span residues 469-488 (MCPAHQNRSLANGPSHPRLD), 516-553 (TFSGSHSCSPSHHCSTATPTSSHRHESHTWSLERSESL), 671-690 (LLRHPAPPGPGPGPGADMQR), 720-806 (ASPF…DGAL), and 823-868 (LRSD…SGPL). Residues 518-530 (SGSHSCSPSHHCS) show a composition bias toward low complexity. Basic and acidic residues predominate over residues 538 to 551 (HRHESHTWSLERSE). The segment covering 766 to 794 (LNGLAAQRARAARDSLSLSSGSGCGSASA) has biased composition (low complexity).

It belongs to the neuregulin family. In terms of assembly, interacts with ERBB3 and ERBB4. Post-translationally, proteolytic cleavage close to the plasma membrane on the external face leads to the release of the soluble growth factor form. In terms of processing, extensive glycosylation precedes the proteolytic cleavage. In terms of tissue distribution, expressed in most parts of the brain, especially the olfactory bulb and cerebellum where it localizes in granule and Purkinje cells. In the hippocampus, found in the granule cells of the dentate gyrus. In the basal forebrain, found in the cholinergic cells. In the hindbrain, weakly detectable in the motor trigeminal nucleus. Not detected in the hypothalamus. Also found in the liver and in the thymus. Not detected in heart, adrenal gland, or testis.

It is found in the cell membrane. The protein resides in the secreted. Its function is as follows. Direct ligand for ERBB3 and ERBB4 tyrosine kinase receptors. Concomitantly recruits ERBB1 and ERBB2 coreceptors, resulting in ligand-stimulated tyrosine phosphorylation and activation of the ERBB receptors. May also promote the heterodimerization with the EGF receptor. This is Pro-neuregulin-2, membrane-bound isoform (Nrg2) from Rattus norvegicus (Rat).